The following is a 376-amino-acid chain: Histidinol-phosphate aminotransferase (376 aa).

An N6-(pyridoxal phosphate)lysine modification is found at lysine 230.

The protein belongs to the class-II pyridoxal-phosphate-dependent aminotransferase family. Histidinol-phosphate aminotransferase subfamily. Homodimer. Pyridoxal 5'-phosphate is required as a cofactor.

The enzyme catalyses L-histidinol phosphate + 2-oxoglutarate = 3-(imidazol-4-yl)-2-oxopropyl phosphate + L-glutamate. It functions in the pathway amino-acid biosynthesis; L-histidine biosynthesis; L-histidine from 5-phospho-alpha-D-ribose 1-diphosphate: step 7/9. This is Histidinol-phosphate aminotransferase from Trichodesmium erythraeum (strain IMS101).